The following is a 542-amino-acid chain: CTP synthase (542 aa).

Residues 1-265 form an amidoligase domain region; sequence MARYVFITGG…DDEVLAAFGI (265 aa). A CTP-binding site is contributed by S13. S13 is a binding site for UTP. Residues 14-19 and D71 contribute to the ATP site; that span reads SLGKGI. Mg(2+) contacts are provided by D71 and E139. CTP contacts are provided by residues 146 to 148, 186 to 191, and K222; these read DIE and KTKPTQ. UTP-binding positions include 186 to 191 and K222; that span reads KTKPTQ. Positions 291 to 541 constitute a Glutamine amidotransferase type-1 domain; that stretch reads TIAIVGKYTG…IEAATEQSRL (251 aa). G353 provides a ligand contact to L-glutamine. The active-site Nucleophile; for glutamine hydrolysis is C380. L-glutamine-binding positions include 381-384, E404, and R469; that span reads FGMQ. Residues H514 and E516 contribute to the active site.

The protein belongs to the CTP synthase family. In terms of assembly, homotetramer.

The enzyme catalyses UTP + L-glutamine + ATP + H2O = CTP + L-glutamate + ADP + phosphate + 2 H(+). It catalyses the reaction L-glutamine + H2O = L-glutamate + NH4(+). The catalysed reaction is UTP + NH4(+) + ATP = CTP + ADP + phosphate + 2 H(+). The protein operates within pyrimidine metabolism; CTP biosynthesis via de novo pathway; CTP from UDP: step 2/2. With respect to regulation, allosterically activated by GTP, when glutamine is the substrate; GTP has no effect on the reaction when ammonia is the substrate. The allosteric effector GTP functions by stabilizing the protein conformation that binds the tetrahedral intermediate(s) formed during glutamine hydrolysis. Inhibited by the product CTP, via allosteric rather than competitive inhibition. In terms of biological role, catalyzes the ATP-dependent amination of UTP to CTP with either L-glutamine or ammonia as the source of nitrogen. Regulates intracellular CTP levels through interactions with the four ribonucleotide triphosphates. This chain is CTP synthase, found in Rhizobium etli (strain ATCC 51251 / DSM 11541 / JCM 21823 / NBRC 15573 / CFN 42).